Here is a 449-residue protein sequence, read N- to C-terminus: Biotin carboxylase (449 aa).

Residues methionine 4 to glycine 448 form the Biotin carboxylation domain. ATP is bound by residues lysine 119, lysine 162, glycine 168 to glycine 169, glutamate 204 to leucine 207, histidine 212, and histidine 239. In terms of domain architecture, ATP-grasp spans isoleucine 123 to alanine 320. Position 241 (lysine 241) interacts with hydrogencarbonate. The ATP site is built by glutamate 279 and glutamate 291. Mg(2+) contacts are provided by glutamate 279, glutamate 291, and asparagine 293. The Mn(2+) site is built by glutamate 279, glutamate 291, and asparagine 293. Hydrogencarbonate is bound by residues arginine 295, valine 298, and arginine 341. Residue arginine 295 is part of the active site. Arginine 341 lines the biotin pocket.

As to quaternary structure, acetyl-CoA carboxylase is a heterohexamer of biotin carboxyl carrier protein, biotin carboxylase and the two subunits of carboxyl transferase in a 2:2 complex. Requires Mg(2+) as cofactor. It depends on Mn(2+) as a cofactor.

It catalyses the reaction N(6)-biotinyl-L-lysyl-[protein] + hydrogencarbonate + ATP = N(6)-carboxybiotinyl-L-lysyl-[protein] + ADP + phosphate + H(+). It participates in lipid metabolism; malonyl-CoA biosynthesis; malonyl-CoA from acetyl-CoA: step 1/1. In terms of biological role, this protein is a component of the acetyl coenzyme A carboxylase complex; first, biotin carboxylase catalyzes the carboxylation of the carrier protein and then the transcarboxylase transfers the carboxyl group to form malonyl-CoA. The polypeptide is Biotin carboxylase (accC) (Allochromatium vinosum (strain ATCC 17899 / DSM 180 / NBRC 103801 / NCIMB 10441 / D) (Chromatium vinosum)).